Here is a 150-residue protein sequence, read N- to C-terminus: Large ribosomal subunit protein bL9 (150 aa).

This sequence belongs to the bacterial ribosomal protein bL9 family.

In terms of biological role, binds to the 23S rRNA. The polypeptide is Large ribosomal subunit protein bL9 (Burkholderia pseudomallei (strain 668)).